Here is a 244-residue protein sequence, read N- to C-terminus: Glucosamine-6-phosphate deaminase (244 aa).

D67 (proton acceptor; for enolization step) is an active-site residue. The active-site For ring-opening step is N136. The active-site Proton acceptor; for ring-opening step is H138. The For ring-opening step role is filled by E143.

Belongs to the glucosamine/galactosamine-6-phosphate isomerase family. NagB subfamily.

It catalyses the reaction alpha-D-glucosamine 6-phosphate + H2O = beta-D-fructose 6-phosphate + NH4(+). It functions in the pathway amino-sugar metabolism; N-acetylneuraminate degradation; D-fructose 6-phosphate from N-acetylneuraminate: step 5/5. Its function is as follows. Catalyzes the reversible isomerization-deamination of glucosamine 6-phosphate (GlcN6P) to form fructose 6-phosphate (Fru6P) and ammonium ion. The chain is Glucosamine-6-phosphate deaminase from Clostridium botulinum (strain 657 / Type Ba4).